Consider the following 136-residue polypeptide: Glutaredoxin-C8 (136 aa).

The region spanning 33 to 135 (SSFVKSTVKA…KLLNIDVKED (103 aa)) is the Glutaredoxin domain. Cys-53 and Cys-56 are joined by a disulfide.

This sequence belongs to the glutaredoxin family. CPYC subfamily.

It localises to the cytoplasm. Functionally, has a glutathione-disulfide oxidoreductase activity in the presence of NADPH and glutathione reductase. Reduces low molecular weight disulfides and proteins. The chain is Glutaredoxin-C8 (GRXC8) from Oryza sativa subsp. japonica (Rice).